A 473-amino-acid polypeptide reads, in one-letter code: MKKNIGKITQIISAVVDVKFTNKGKLPQILNALECYNDKQRIVLEIAQHIGDDTVRCIAMNSTEGLVRGMEVVDTGSPISIPVGIETLGRIMNVVGEPIDGKGKIKGSSISSIYKSAPSFTQQSTDRNILVTGIKVVDLLAPYTKGGKIGLFGGAGVGKTVLIMELINNVAKAHGGYTVFAGVGERTREGNDLYHEMIDSGVINLEEPEKSKVALVYGQMNEPPGARARVALTGLTVAESFRDMNEGQDVLFFVDNIFRFTQAGSEVSALLGRIPSAVGYQPTLATDMGELQERITSTKHGSITSVQAIYVPADDLTDPAPATSFAHLDATTVLSRQIAELGIYPAVDPLDSTSQVLDPMIVGEEHYNVARKVQQILQTYKSLQDIIAILGMDELSEEDKLTVSRARKIQRFLSQPFHVAEVFTGAEGKFVNLADTIAGFKGLTEGKYDDLPEAAFYMVGTIEEALEKAKTLK.

153-160 serves as a coordination point for ATP; sequence GGAGVGKT.

This sequence belongs to the ATPase alpha/beta chains family. As to quaternary structure, F-type ATPases have 2 components, CF(1) - the catalytic core - and CF(0) - the membrane proton channel. CF(1) has five subunits: alpha(3), beta(3), gamma(1), delta(1), epsilon(1). CF(0) has three main subunits: a(1), b(2) and c(9-12). The alpha and beta chains form an alternating ring which encloses part of the gamma chain. CF(1) is attached to CF(0) by a central stalk formed by the gamma and epsilon chains, while a peripheral stalk is formed by the delta and b chains.

It localises to the cell inner membrane. The catalysed reaction is ATP + H2O + 4 H(+)(in) = ADP + phosphate + 5 H(+)(out). Functionally, produces ATP from ADP in the presence of a proton gradient across the membrane. The catalytic sites are hosted primarily by the beta subunits. This is ATP synthase subunit beta from Rickettsia bellii (strain RML369-C).